The chain runs to 404 residues: MKLPIYLDYAATTPVDPRVAEKMFQCMTMDGIFGNPASRSHRYGWQAEEAVDIARNQIAELINADHREIVFTSGATESNNLAIKGVAHFYHKKGKHIITSKTEHKAVLDTCRQLEREGFEVTYLEPAANGIIPMERLEAAMRDDTILVSIMHVNNEIGVIHDIDAIGELCRSKGIIFHMDAAQSAGKVPIDVQATQVDLLSISGHKMYGPKGIGALYVRRKPRIRLEAQMHGGGHERGMRSGTLPTHQIVGLGEAAAIAKAEMASDDARIGALRDKLWNGIKHIEETYINGDAIERVSGSLNVSFNYVEGESLMMALKDLAVSSGSACTSASLEPSYVLRALGLNDEMAHSSIRFSIGRFTTEEEIDHAIEVITQSIDKLREMSPLWEMFKDGIDLNQVQWAHH.

Pyridoxal 5'-phosphate-binding positions include alanine 75–threonine 76, asparagine 155, glutamine 183, and serine 203–histidine 205. Position 206 is an N6-(pyridoxal phosphate)lysine (lysine 206). Threonine 243 is a pyridoxal 5'-phosphate binding site. Catalysis depends on cysteine 328, which acts as the Cysteine persulfide intermediate. Cysteine 328 is a binding site for [2Fe-2S] cluster.

The protein belongs to the class-V pyridoxal-phosphate-dependent aminotransferase family. NifS/IscS subfamily. Homodimer. Forms a heterotetramer with IscU, interacts with other sulfur acceptors. Pyridoxal 5'-phosphate serves as cofactor.

Its subcellular location is the cytoplasm. It carries out the reaction (sulfur carrier)-H + L-cysteine = (sulfur carrier)-SH + L-alanine. The protein operates within cofactor biosynthesis; iron-sulfur cluster biosynthesis. Functionally, master enzyme that delivers sulfur to a number of partners involved in Fe-S cluster assembly, tRNA modification or cofactor biosynthesis. Catalyzes the removal of elemental sulfur atoms from cysteine to produce alanine. Functions as a sulfur delivery protein for Fe-S cluster synthesis onto IscU, an Fe-S scaffold assembly protein, as well as other S acceptor proteins. The protein is Cysteine desulfurase IscS of Shewanella baltica (strain OS223).